The following is a 128-amino-acid chain: Probable 4-amino-4-deoxy-L-arabinose-phosphoundecaprenol flippase subunit ArnF (128 aa).

Over 1–2 (MC) the chain is Cytoplasmic. The chain crosses the membrane as a helical span at residues 3 to 23 (LIWGLFSVIIASVAQLSLGFA). Topologically, residues 24–35 (ASHLPPMTHLWD) are periplasmic. A helical transmembrane segment spans residues 36–56 (FIAALLAFGLDARILLLGLLG). Topologically, residues 57 to 76 (YLLSVFCWYKTLHKLALSKA) are cytoplasmic. Residues 77-97 (YALLSMSYVLVWIASMVLPGW) form a helical membrane-spanning segment. The Periplasmic portion of the chain corresponds to 98 to 100 (EGT). Residues 101–121 (FSLKALLGVACIMSGLMLIFL) form a helical membrane-spanning segment. The Cytoplasmic segment spans residues 122–128 (PTTKQRY).

The protein belongs to the ArnF family. Heterodimer of ArnE and ArnF.

Its subcellular location is the cell inner membrane. Its pathway is bacterial outer membrane biogenesis; lipopolysaccharide biosynthesis. Translocates 4-amino-4-deoxy-L-arabinose-phosphoundecaprenol (alpha-L-Ara4N-phosphoundecaprenol) from the cytoplasmic to the periplasmic side of the inner membrane. In Shigella flexneri, this protein is Probable 4-amino-4-deoxy-L-arabinose-phosphoundecaprenol flippase subunit ArnF.